The following is a 399-amino-acid chain: Probable peptidoglycan glycosyltransferase FtsW (399 aa).

Residues Met-1–Asn-32 lie on the Cytoplasmic side of the membrane. A helical transmembrane segment spans residues Val-33–Ser-53. The Periplasmic segment spans residues Met-54 to Ala-72. Residues Ile-73 to Trp-93 form a helical membrane-spanning segment. Topologically, residues Phe-94 to Thr-97 are cytoplasmic. A helical membrane pass occupies residues Phe-98–Val-118. Residues Asn-119–Arg-126 are Periplasmic-facing. The chain crosses the membrane as a helical span at residues Leu-127–Ala-147. The Cytoplasmic portion of the chain corresponds to Asp-148–Thr-159. A helical transmembrane segment spans residues His-160–Ala-180. At Glu-181–Asp-183 the chain is on the periplasmic side. The chain crosses the membrane as a helical span at residues Leu-184–Pro-204. The Cytoplasmic segment spans residues Pro-205–Gln-207. The helical transmembrane segment at Phe-208–Tyr-228 threads the bilayer. Topologically, residues Arg-229–Glu-292 are periplasmic. The helical transmembrane segment at Phe-293 to Ile-313 threads the bilayer. Residues Lys-314–Ala-327 lie on the Cytoplasmic side of the membrane. A helical transmembrane segment spans residues Gly-328–Met-348. The Periplasmic portion of the chain corresponds to Asn-349 to Thr-359. The chain crosses the membrane as a helical span at residues Leu-360–Ile-380. Topologically, residues Leu-381 to Phe-399 are cytoplasmic.

This sequence belongs to the SEDS family. FtsW subfamily.

It localises to the cell inner membrane. It carries out the reaction [GlcNAc-(1-&gt;4)-Mur2Ac(oyl-L-Ala-gamma-D-Glu-L-Lys-D-Ala-D-Ala)](n)-di-trans,octa-cis-undecaprenyl diphosphate + beta-D-GlcNAc-(1-&gt;4)-Mur2Ac(oyl-L-Ala-gamma-D-Glu-L-Lys-D-Ala-D-Ala)-di-trans,octa-cis-undecaprenyl diphosphate = [GlcNAc-(1-&gt;4)-Mur2Ac(oyl-L-Ala-gamma-D-Glu-L-Lys-D-Ala-D-Ala)](n+1)-di-trans,octa-cis-undecaprenyl diphosphate + di-trans,octa-cis-undecaprenyl diphosphate + H(+). It participates in cell wall biogenesis; peptidoglycan biosynthesis. Peptidoglycan polymerase that is essential for cell division. The polypeptide is Probable peptidoglycan glycosyltransferase FtsW (Acinetobacter baylyi (strain ATCC 33305 / BD413 / ADP1)).